Reading from the N-terminus, the 339-residue chain is HPr kinase/phosphorylase (339 aa).

Active-site residues include H153 and K174. 168–175 serves as a coordination point for ATP; the sequence is GKSGLGKS. Position 175 (S175) interacts with Mg(2+). D192 acts as the Proton acceptor; for phosphorylation activity. Proton donor; for dephosphorylation activity in catalysis. Positions 216 to 225 are important for the catalytic mechanism of both phosphorylation and dephosphorylation; the sequence is MEIRGLGVVD. Residue E217 participates in Mg(2+) binding. The active site involves R258. The important for the catalytic mechanism of dephosphorylation stretch occupies residues 279-284; it reads PINPGK.

The protein belongs to the HPrK/P family. Homohexamer. It depends on Mg(2+) as a cofactor.

It catalyses the reaction [HPr protein]-L-serine + ATP = [HPr protein]-O-phospho-L-serine + ADP + H(+). It carries out the reaction [HPr protein]-O-phospho-L-serine + phosphate + H(+) = [HPr protein]-L-serine + diphosphate. Its function is as follows. Catalyzes the ATP- as well as the pyrophosphate-dependent phosphorylation of a specific serine residue in HPr, a phosphocarrier protein of the phosphoenolpyruvate-dependent sugar phosphotransferase system (PTS). HprK/P also catalyzes the pyrophosphate-producing, inorganic phosphate-dependent dephosphorylation (phosphorolysis) of seryl-phosphorylated HPr (P-Ser-HPr). This Chlorobium phaeobacteroides (strain BS1) protein is HPr kinase/phosphorylase.